We begin with the raw amino-acid sequence, 199 residues long: Protein C (199 aa).

Composition is skewed to polar residues over residues 19-34 and 43-57; these read QLISPRPSTSLNSYSA and KTTQSTQEPSNSAPP. The segment at 19–67 is disordered; it reads QLISPRPSTSLNSYSAPTPKKTYRKTTQSTQEPSNSAPPSVNQKSNQQK. Over residues 58-67 the composition is skewed to low complexity; that stretch reads SVNQKSNQQK.

Belongs to the respirovirus protein C family.

This chain is Protein C (P/V/C), found in Human parainfluenza 3 virus (strain Wash/47885/57) (HPIV-3).